The chain runs to 217 residues: Tegument protein BKRF4 (217 aa).

The disordered stretch occupies residues 1–217 (MAMFLKSRGV…GNNNYNWPWL (217 aa)). Over residues 32–42 (YTLGSQASQSI) the composition is skewed to polar residues. The span at 43–79 (QEEDVSDTDESDYSDEDEEIDLEEEYPSDEDPSEGSD) shows a compositional bias: acidic residues. The interaction with host histones H3/H4 stretch occupies residues 63–64 (DL). Positions 81–84 (DPSW) are interaction with host H2A/H2B. Residues 89 to 102 (SDESDYSESDEDEA) are compositionally biased toward acidic residues. Residues 106-132 (SQASRSSRVSPSTQQSSGLTPTPSFSR) are compositionally biased toward low complexity. Residues 136–145 (RAPPRPPAPA) show a composition bias toward pro residues. Residues 208 to 217 (GNNNYNWPWL) are compositionally biased toward polar residues.

Belongs to the lymphocryptovirus BKRF4 family. In terms of assembly, forms a complex with the host H3/H4 dimer and histone chaperone ASF1. Also forms a complex with host H2A/H2B dimer. Interacts (via C-terminus) with BGLF2; this interaction is important for infectious virion production.

It localises to the virion tegument. Its subcellular location is the host nucleus. It is found in the host cytoplasm. The protein localises to the host perinuclear region. Its function is as follows. Histone-binding protein that binds to histones H2A/H2B, H3/H4 and cellular chromatin to overcome the host DNA damage response triggered by the viral genome ends. Interferes with histone ubiquitination and recruitment of repair proteins. The sequence is that of Tegument protein BKRF4 from Epstein-Barr virus (strain AG876) (HHV-4).